A 317-amino-acid chain; its full sequence is Olfactory receptor 1B1 (317 aa).

Topologically, residues 1 to 29 are extracellular; that stretch reads MSFAPNASHSPVFLLLGFSRANISYTLLF. Residues asparagine 6 and asparagine 22 are each glycosylated (N-linked (GlcNAc...) asparagine). A helical membrane pass occupies residues 30–50; it reads FLFLAIYLTTILGNVTLVLLI. Topologically, residues 51 to 66 are cytoplasmic; it reads SWDSRLHSPMYYLLRG. Residues 67 to 87 form a helical membrane-spanning segment; the sequence is LSVIDMGLSTVTLPQLLAHLV. The Extracellular portion of the chain corresponds to 88–98; it reads SHYPTIPAARC. The cysteines at positions 98 and 184 are disulfide-linked. A helical membrane pass occupies residues 99–119; that stretch reads LAQFFFFYAFGVTDTLVIAVM. At 120 to 144 the chain is on the cytoplasmic side; the sequence is ALDRYVAICDPLHYALVMNHQRCAC. A helical transmembrane segment spans residues 145–165; sequence LLALSWVVSILHTMLRVGLVL. Residues 166-201 are Extracellular-facing; that stretch reads PLCWTGDAGGNVNLPHFFCDHRPLLRASCSDIHSNE. A helical transmembrane segment spans residues 202-222; the sequence is LAIFFEGGFLMLGPCALIVLS. Residues 223-248 lie on the Cytoplasmic side of the membrane; it reads YVRIGAAILRLPSAAGRRRAVSTCGS. The chain crosses the membrane as a helical span at residues 249–269; that stretch reads HLTMVGFLYGTIICVYFQPPF. Over 270 to 276 the chain is Extracellular; sequence QNSQYQD. Residues 277-297 form a helical membrane-spanning segment; the sequence is MVASVMYTAITPLANPFVYSL. Over 298-317 the chain is Cytoplasmic; sequence HNKDVKGALCRLLEWVKVDP.

Belongs to the G-protein coupled receptor 1 family.

The protein localises to the cell membrane. Odorant receptor. The protein is Olfactory receptor 1B1 (OR1B1) of Homo sapiens (Human).